The sequence spans 254 residues: uncharacterized protein (254 aa).

This is an uncharacterized protein from Methanocaldococcus jannaschii (strain ATCC 43067 / DSM 2661 / JAL-1 / JCM 10045 / NBRC 100440) (Methanococcus jannaschii).